Here is a 671-residue protein sequence, read N- to C-terminus: DNA ligase (671 aa).

Residues 31–35 (DAEYD), 80–81 (SL), and glutamate 110 each bind NAD(+). Catalysis depends on lysine 112, which acts as the N6-AMP-lysine intermediate. NAD(+)-binding residues include arginine 133, glutamate 167, lysine 283, and lysine 307. Zn(2+)-binding residues include cysteine 401, cysteine 404, cysteine 419, and cysteine 424. One can recognise a BRCT domain in the interval 587-671 (EEELVFAGKT…YLPDEGGLNE (85 aa)).

It belongs to the NAD-dependent DNA ligase family. LigA subfamily. Requires Mg(2+) as cofactor. It depends on Mn(2+) as a cofactor.

It catalyses the reaction NAD(+) + (deoxyribonucleotide)n-3'-hydroxyl + 5'-phospho-(deoxyribonucleotide)m = (deoxyribonucleotide)n+m + AMP + beta-nicotinamide D-nucleotide.. DNA ligase that catalyzes the formation of phosphodiester linkages between 5'-phosphoryl and 3'-hydroxyl groups in double-stranded DNA using NAD as a coenzyme and as the energy source for the reaction. It is essential for DNA replication and repair of damaged DNA. This is DNA ligase from Listeria monocytogenes serotype 4a (strain HCC23).